The following is a 103-amino-acid chain: Potassium voltage-gated channel subfamily E member 3 (103 aa).

Residues N5, N22, and N41 are each glycosylated (N-linked (GlcNAc...) asparagine). The disordered stretch occupies residues 32–53 (RPGPGLGPDNQTEERRASLPGR). Basic and acidic residues predominate over residues 43-53 (TEERRASLPGR). Residues 57 to 77 (SYMYILFVMFLFAVTVGSLIL) traverse the membrane as a helical segment. Positions 68–79 (FAVTVGSLILGY) are interaction with KCNQ1. Residues 78–103 (GYTRSRKVDKRSDPYHVYIKNRVSMI) are Cytoplasmic-facing.

Belongs to the potassium channel KCNE family. In terms of assembly, interacts with KCNB1. Interacts with KCNC2. Associates with KCNC4/Kv3.4. Interacts with KCNQ1; associates with a KCNQ1:KCNE3 stoichiometry of 4:4; produces a current with nearly instantaneous activation with a linear current-voltage relationship and alters membrane raft localization; affects KCNQ1 structure and gating properties. As to expression, expressed in hippocampal neurons (at protein level). Widely expressed with highest levels in kidney and moderate levels in small intestine.

The protein localises to the cell membrane. Its subcellular location is the cytoplasm. It is found in the perikaryon. The protein resides in the cell projection. It localises to the dendrite. The protein localises to the membrane raft. Functionally, ancillary protein that functions as a regulatory subunit of the voltage-gated potassium (Kv) channel complex composed of pore-forming and potassium-conducting alpha subunits and of regulatory beta subunits. KCNE3 beta subunit modulates the gating kinetics and enhances stability of the channel complex. Alters the gating of the delayed rectifier Kv channel containing KCNB1 alpha subunit. Associates with KCNC4/Kv3.4 alpha subunit to form the subthreshold Kv channel in skeletal muscle and to establish the resting membrane potential (RMP) in muscle cells. Association with KCNQ1/KCLQT1 alpha subunit may form the intestinal cAMP-stimulated potassium channel involved in chloride secretion that produces a current with nearly instantaneous activation with a linear current-voltage relationship. The protein is Potassium voltage-gated channel subfamily E member 3 of Homo sapiens (Human).